Consider the following 364-residue polypeptide: Alanine racemase (364 aa).

Lys-34 serves as the catalytic Proton acceptor; specific for D-alanine. Lys-34 is subject to N6-(pyridoxal phosphate)lysine. Position 129 (Arg-129) interacts with substrate. The active-site Proton acceptor; specific for L-alanine is the Tyr-259. Met-307 is a substrate binding site.

The protein belongs to the alanine racemase family. Pyridoxal 5'-phosphate is required as a cofactor.

The enzyme catalyses L-alanine = D-alanine. It participates in amino-acid biosynthesis; D-alanine biosynthesis; D-alanine from L-alanine: step 1/1. Functionally, catalyzes the interconversion of L-alanine and D-alanine. May also act on other amino acids. In Coxiella burnetii (strain RSA 493 / Nine Mile phase I), this protein is Alanine racemase (alr).